Consider the following 198-residue polypeptide: Copy number protein (198 aa).

It localises to the cell membrane. Its function is as follows. Involved in copy number control of pIP404. This basic and hydrophobic protein may exert its effect from the cytoplasmic membrane. The protein is Copy number protein (cop) of Clostridium perfringens.